A 395-amino-acid polypeptide reads, in one-letter code: 1-deoxy-D-xylulose 5-phosphate reductoisomerase (395 aa).

Positions 10, 11, 12, 13, 37, and 123 each coordinate NADPH. K124 is a binding site for 1-deoxy-D-xylulose 5-phosphate. E125 is a binding site for NADPH. D149 is a Mn(2+) binding site. 1-deoxy-D-xylulose 5-phosphate-binding residues include S150, E151, S185, and H208. E151 is a Mn(2+) binding site. G214 is an NADPH binding site. S221, N226, K227, and E230 together coordinate 1-deoxy-D-xylulose 5-phosphate. Mn(2+) is bound at residue E230.

It belongs to the DXR family. Mg(2+) serves as cofactor. Mn(2+) is required as a cofactor.

It catalyses the reaction 2-C-methyl-D-erythritol 4-phosphate + NADP(+) = 1-deoxy-D-xylulose 5-phosphate + NADPH + H(+). Its pathway is isoprenoid biosynthesis; isopentenyl diphosphate biosynthesis via DXP pathway; isopentenyl diphosphate from 1-deoxy-D-xylulose 5-phosphate: step 1/6. Its function is as follows. Catalyzes the NADPH-dependent rearrangement and reduction of 1-deoxy-D-xylulose-5-phosphate (DXP) to 2-C-methyl-D-erythritol 4-phosphate (MEP). The chain is 1-deoxy-D-xylulose 5-phosphate reductoisomerase from Shewanella loihica (strain ATCC BAA-1088 / PV-4).